Reading from the N-terminus, the 1015-residue chain is SKI family transcriptional corepressor 2 (1015 aa).

Disordered regions lie at residues 280 to 316 (HLLG…DDDD) and 518 to 934 (GAAG…KKDV). Positions 284-295 (APPPPPPPPPPL) are enriched in pro residues. Residues 575–600 (PPADSVAAAGAGAAAAGSGPAGSRVP) are compositionally biased toward low complexity. Over residues 628 to 637 (GGKDDAESLA) the composition is skewed to basic and acidic residues. A compositionally biased stretch (basic residues) spans 653–669 (HPHHHHHPHHHHHHHHP). Composition is skewed to pro residues over residues 670 to 684 (PQPP…PQPD) and 694 to 708 (APPP…PPLA). Acidic residues-rich tracts occupy residues 730–745 (DSSE…QEVD) and 754–774 (GEEE…EETE). Residues 793–803 (PSEKGSSRDRA) show a composition bias toward basic and acidic residues. Over residues 832–842 (DLPPPPPPPLA) the composition is skewed to pro residues. Basic and acidic residues-rich tracts occupy residues 861–877 (PSLE…KTKE), 885–899 (TKDD…KEHS), and 912–922 (FWRERSGEHTQ).

It belongs to the SKI family. As to quaternary structure, interacts with SMAD2 and SMAD3. In terms of tissue distribution, expressed in cerebellum, spinal cord and testis. Isoform 2 is present in cerebellum (at protein level).

It localises to the nucleus. The protein resides in the cytoplasm. In terms of biological role, exhibits transcriptional repressor activity. Acts as a TGF-beta antagonist in the nervous system. The chain is SKI family transcriptional corepressor 2 from Homo sapiens (Human).